The sequence spans 318 residues: MPVINLLLLTMSILIAMAFLMLTERKILGYTQLRKGPNIVGPCGLLQPFADALKLFTKEPLKPSTSTTILYIVSPALALTIALLLWTPLPMPNPLINLNLGLLFILATSSLTVYSILWSGWASNSNYALIGTLRAVAQTISYEITLALILLSVLLMSGSFNLSTLITTQEHSWLLLPSWPLALMWFISTLAETNRAPFDLTEGESELVSGFNTEYAAGPFALFFMAEYTNIILMNALTAMIFLGTTFNIHSPELHTTLFTIKTLLLTSLFLWIRSTYPRFRYDQLMHLLWKNFLPLTLALLMWHISMPITTSGIPPQT.

Helical transmembrane passes span 2 to 22 (PVIN…FLML), 69 to 89 (ILYI…WTPL), 100 to 120 (LGLL…LWSG), 146 to 166 (LALI…STLI), 171 to 191 (HSWL…STLA), 222 to 242 (LFFM…AMIF), 253 to 273 (ELHT…FLWI), and 294 to 314 (LPLT…TSGI).

Belongs to the complex I subunit 1 family. As to quaternary structure, core subunit of respiratory chain NADH dehydrogenase (Complex I) which is composed of 45 different subunits.

Its subcellular location is the mitochondrion inner membrane. It catalyses the reaction a ubiquinone + NADH + 5 H(+)(in) = a ubiquinol + NAD(+) + 4 H(+)(out). Functionally, core subunit of the mitochondrial membrane respiratory chain NADH dehydrogenase (Complex I) which catalyzes electron transfer from NADH through the respiratory chain, using ubiquinone as an electron acceptor. Essential for the catalytic activity and assembly of complex I. The protein is NADH-ubiquinone oxidoreductase chain 1 (MT-ND1) of Pongo pygmaeus (Bornean orangutan).